The sequence spans 120 residues: NAD(P)H-quinone oxidoreductase subunit 3, chloroplastic (120 aa).

A run of 3 helical transmembrane segments spans residues 10 to 30, 64 to 84, and 89 to 109; these read FWLF…ISKI, MFAL…PWAM, and LGIS…IGLI.

This sequence belongs to the complex I subunit 3 family. In terms of assembly, NDH is composed of at least 16 different subunits, 5 of which are encoded in the nucleus.

It is found in the plastid. The protein localises to the chloroplast thylakoid membrane. The catalysed reaction is a plastoquinone + NADH + (n+1) H(+)(in) = a plastoquinol + NAD(+) + n H(+)(out). It carries out the reaction a plastoquinone + NADPH + (n+1) H(+)(in) = a plastoquinol + NADP(+) + n H(+)(out). Functionally, NDH shuttles electrons from NAD(P)H:plastoquinone, via FMN and iron-sulfur (Fe-S) centers, to quinones in the photosynthetic chain and possibly in a chloroplast respiratory chain. The immediate electron acceptor for the enzyme in this species is believed to be plastoquinone. Couples the redox reaction to proton translocation, and thus conserves the redox energy in a proton gradient. The chain is NAD(P)H-quinone oxidoreductase subunit 3, chloroplastic from Angiopteris evecta (Mule's foot fern).